Here is a 794-residue protein sequence, read N- to C-terminus: Ribonucleoside-diphosphate reductase large subunit (794 aa).

Residues 1–92 enclose the ATP-cone domain; it reads MHVIKRDGGQ…VSNLHKETKK (92 aa). Residues 5 to 6, 11 to 17, Thr-53, and Asp-57 contribute to the ATP site; these read KR and EGVMFDK. The GDP site is built by Ser-202 and Ser-217. A disulfide bridge links Cys-218 with Cys-444. DTTP contacts are provided by residues 226-228, Lys-243, Arg-256, and 263-264; these read DSI and AG. Asn-427 is a binding site for GDP. Catalysis depends on Asn-427, which acts as the Proton acceptor. Catalysis depends on Cys-429, which acts as the Cysteine radical intermediate. Residues Glu-431 and 604-607 contribute to the GDP site; that span reads TAST. Residue Glu-431 is the Proton acceptor of the active site.

The protein belongs to the ribonucleoside diphosphate reductase large chain family. Heterodimer of a large and a small subunit.

The protein localises to the cytoplasm. The catalysed reaction is a 2'-deoxyribonucleoside 5'-diphosphate + [thioredoxin]-disulfide + H2O = a ribonucleoside 5'-diphosphate + [thioredoxin]-dithiol. With respect to regulation, under complex allosteric control mediated by deoxynucleoside triphosphates and ATP binding to separate specificity and activation sites on the M1 subunit. The type of nucleotide bound at the specificity site determines substrate preference. It seems probable that ATP makes the enzyme reduce CDP and UDP, dGTP favors ADP reduction and dTTP favors GDP reduction. Stimulated by ATP and inhibited by dATP binding to the activity site. Functionally, provides the precursors necessary for DNA synthesis. Catalyzes the biosynthesis of deoxyribonucleotides from the corresponding ribonucleotides. The sequence is that of Ribonucleoside-diphosphate reductase large subunit (rrm1) from Danio rerio (Zebrafish).